The following is a 244-amino-acid chain: Cysteine-rich secretory protein 1 (244 aa).

A signal peptide spans 1–19 (MALMLVLFFLAAVLPPSLL). The SCP domain occupies 44–170 (SKHNQLRRMV…PLRYYYVCHY (127 aa)). A glycan (N-linked (GlcNAc...) asparagine) is linked at Asn145. 5 disulfide bridges follow: Cys190/Cys197, Cys193/Cys202, Cys206/Cys239, Cys215/Cys233, and Cys224/Cys237. The 34-residue stretch at 206 to 239 (CGHEDKYTNCKYLKKMLSCEHELLKKGCKATCLC) folds into the ShKT domain.

This sequence belongs to the CRISP family. Mainly found in the cauda epididymis where it is synthesized by the principal cells and secreted into the lumen. Binds to the heads of spermatozoa. Also expressed in the submandibular gland.

It is found in the cytoplasmic vesicle. Its subcellular location is the secretory vesicle. Functionally, this protein is supposed to help spermatozoa undergo functional maturation while they move from the testis to the ductus deferens. The polypeptide is Cysteine-rich secretory protein 1 (Crisp1) (Mus musculus (Mouse)).